A 202-amino-acid chain; its full sequence is dITP/XTP pyrophosphatase (202 aa).

10–15 lines the substrate pocket; the sequence is TSNRHK. Asp70 serves as the catalytic Proton acceptor. Asp70 is a binding site for Mg(2+). Substrate-binding positions include Ser71, 153–156, Lys176, and 181–182; these read FGYD and HR.

The protein belongs to the HAM1 NTPase family. As to quaternary structure, homodimer. The cofactor is Mg(2+).

It carries out the reaction XTP + H2O = XMP + diphosphate + H(+). It catalyses the reaction dITP + H2O = dIMP + diphosphate + H(+). The catalysed reaction is ITP + H2O = IMP + diphosphate + H(+). Pyrophosphatase that catalyzes the hydrolysis of nucleoside triphosphates to their monophosphate derivatives, with a high preference for the non-canonical purine nucleotides XTP (xanthosine triphosphate), dITP (deoxyinosine triphosphate) and ITP. Seems to function as a house-cleaning enzyme that removes non-canonical purine nucleotides from the nucleotide pool, thus preventing their incorporation into DNA/RNA and avoiding chromosomal lesions. This is dITP/XTP pyrophosphatase from Methylacidiphilum infernorum (isolate V4) (Methylokorus infernorum (strain V4)).